Reading from the N-terminus, the 307-residue chain is Mitochondrial brown fat uncoupling protein 1 (307 aa).

Over 1–10 (MVSSTTSEVQ) the chain is Mitochondrial intermembrane. A helical transmembrane segment spans residues 11-32 (PTMGVKIFSAGVSACLADIITF). Solcar repeat units lie at residues 11 to 102 (PTMG…VQEY), 111 to 201 (ASLG…MKGA), and 210 to 295 (DDVP…LKKE). The Mitochondrial matrix portion of the chain corresponds to 33–73 (PLDTAKVRLQIQGEGQASSTIRYKGVLGTITTLAKTEGLPK). Lysine 56 contributes to the fatty acid 16:0 binding site. A helical membrane pass occupies residues 74 to 96 (LYSGLPAGIQRQISFASLRIGLY). Residues 97–116 (DTVQEYFSSGRETPASLGSK) lie on the Mitochondrial intermembrane side of the membrane. Residues 117–133 (ISAGLMTGGVAVFIGQP) traverse the membrane as a helical segment. Residues 134–178 (TEVVKVRMQAQSHLHGIKPRYTGTYNAYRVIATTESLSTLWKGTT) lie on the Mitochondrial matrix side of the membrane. A helical transmembrane segment spans residues 179 to 195 (PNLMRNVIINCTELVTY). Topologically, residues 196–212 (DLMKGALVNHHILADDV) are mitochondrial intermembrane. A helical membrane pass occupies residues 213–232 (PCHLLSALVAGFCTTLLASP). Over 233 to 266 (VDVVKTRFINSLPGQYPSVPSCAMTMYTKEGPAA) the chain is Mitochondrial matrix. Position 254 is a cysteine sulfenic acid (-SOH) (cysteine 254). The helical transmembrane segment at 267–289 (FFKGFAPSFLRLGSWNVIMFVCF) threads the bilayer. Lysine 269 serves as a coordination point for fatty acid 16:0. Over 290–307 (EQLKKELMKSRQTVDCTT) the chain is Mitochondrial intermembrane.

It belongs to the mitochondrial carrier (TC 2.A.29) family. Most probably functions as a monomer. Binds one purine nucleotide per monomer. However, has also been suggested to function as a homodimer or a homotetramer. Tightly associates with cardiolipin in the mitochondrion inner membrane; may stabilize and regulate its activity. In terms of processing, may undergo ubiquitin-mediated proteasomal degradation. Post-translationally, may undergo sulfenylation upon cold exposure. May increase the sensitivity of UCP1 thermogenic function to the activation by noradrenaline probably through structural effects. Brown adipose tissue.

It is found in the mitochondrion inner membrane. It catalyses the reaction H(+)(in) = H(+)(out). Its activity is regulated as follows. Has no constitutive proton transporter activity and has to be activated by long-chain fatty acids/LCFAs. Inhibited by purine nucleotides. Both purine nucleotides and LCFAs bind the cytosolic side of the transporter and directly compete to activate or inhibit it. Activated by noradrenaline and reactive oxygen species. Despite lacking canonical translational encoding for selenocysteine, a small pool of the protein has been observed to selectively incorporate selenocysteine at 'Cys-254'. Selenocysteine-modified protein is highly sensitive to redox modification and may constitute a pool of protein highly sensitive to activation by elevated levels of reactive oxygen species (ROS). In terms of biological role, mitochondrial protein responsible for thermogenic respiration, a specialized capacity of brown adipose tissue and beige fat that participates in non-shivering adaptive thermogenesis to temperature and diet variations and more generally to the regulation of energy balance. Functions as a long-chain fatty acid/LCFA and proton symporter, simultaneously transporting one LCFA and one proton through the inner mitochondrial membrane. However, LCFAs remaining associated with the transporter via their hydrophobic tails, it results in an apparent transport of protons activated by LCFAs. Thereby, dissipates the mitochondrial proton gradient and converts the energy of substrate oxydation into heat instead of ATP. Regulates the production of reactive oxygen species/ROS by mitochondria. The polypeptide is Mitochondrial brown fat uncoupling protein 1 (Rattus norvegicus (Rat)).